Reading from the N-terminus, the 1608-residue chain is Mitogen-activated protein kinase kinase kinase 4 (1608 aa).

Residues 1–23 (MREAAAALVPPPAFAVTPAAAME) show a composition bias toward low complexity. 2 disordered regions span residues 1-136 (MREA…ENVE) and 429-478 (IPSP…RQPI). The span at 24-37 (EPPPPPPPPPPPPE) shows a compositional bias: pro residues. Acidic residues predominate over residues 66 to 76 (SDLEDFSDETN). Serine 84 is subject to Phosphoserine. Over residues 91–101 (QMKRMSTKHQR) the composition is skewed to basic residues. The residue at position 431 (serine 431) is a Phosphoserine. Threonine 447 carries the post-translational modification Phosphothreonine. Serine 456 and serine 457 each carry phosphoserine. Residues 456–466 (SSTDESEEEQI) are compositionally biased toward acidic residues. A Phosphothreonine modification is found at threonine 458. Residues serine 461, serine 481, and serine 499 each carry the phosphoserine modification. Disordered regions lie at residues 1157 to 1190 (CHSD…GSPA), 1202 to 1231 (ASRP…SVPE), and 1244 to 1274 (FRSL…TRRS). The segment covering 1217–1230 (SISSAHDTRGSSVP) has biased composition (polar residues). Phosphoserine occurs at positions 1252 and 1274. Basic and acidic residues predominate over residues 1252-1261 (SPTEERDEPA). In terms of domain architecture, Protein kinase spans 1343-1601 (WQRGNKIGEG…ASQLLDHSFV (259 aa)). Residues 1349-1357 (IGEGQYGKV) and lysine 1372 contribute to the ATP site. Residue aspartate 1463 is the Proton acceptor of the active site.

The protein belongs to the protein kinase superfamily. STE Ser/Thr protein kinase family. MAP kinase kinase kinase subfamily. As to quaternary structure, monomer and homodimer. Homodimerization enhances kinase activity. Interacts with TRAF4; this promotes homodimerization. Binds both upstream activators and downstream substrates in multimolecular complexes. Interacts with AXIN1 and DIXDC1; interaction with DIXDC1 prevents interaction with AXIN1. Interacts with GADD45 and MAP2K6. Interacts with ZFP36; this interaction enhances the association with SH3KBP1/CIN85. Interacts with SH3KBP1; this interaction enhances the association with ZFP36. Interacts with CDC42. The cofactor is Mg(2+). In terms of tissue distribution, expressed at high levels in heart, placenta, skeletal muscle and pancreas, and at lower levels in other tissues.

The protein resides in the cytoplasm. Its subcellular location is the perinuclear region. The catalysed reaction is L-seryl-[protein] + ATP = O-phospho-L-seryl-[protein] + ADP + H(+). It catalyses the reaction L-threonyl-[protein] + ATP = O-phospho-L-threonyl-[protein] + ADP + H(+). Its activity is regulated as follows. N-terminal autoinhibitory domain interacts with the C-terminal kinase domain, inhibiting kinase activity, and preventing interaction with its substrate, MAP2K6. The GADD45 proteins activate the kinase by binding to the N-terminal domain. Activated by phosphorylation on Thr-1505. Its function is as follows. Component of a protein kinase signal transduction cascade. Activates the CSBP2, P38 and JNK MAPK pathways, but not the ERK pathway. Specifically phosphorylates and activates MAP2K4 and MAP2K6. This Homo sapiens (Human) protein is Mitogen-activated protein kinase kinase kinase 4 (MAP3K4).